The primary structure comprises 76 residues: UPF0291 protein BCE_1981 (76 aa).

This sequence belongs to the UPF0291 family.

It localises to the cytoplasm. This chain is UPF0291 protein BCE_1981, found in Bacillus cereus (strain ATCC 10987 / NRS 248).